A 307-amino-acid chain; its full sequence is Ribosomal RNA small subunit methyltransferase H (307 aa).

S-adenosyl-L-methionine-binding positions include 33 to 35 (AGH), Asp52, Leu83, Asp97, and Gln104.

The protein belongs to the methyltransferase superfamily. RsmH family.

It localises to the cytoplasm. It catalyses the reaction cytidine(1402) in 16S rRNA + S-adenosyl-L-methionine = N(4)-methylcytidine(1402) in 16S rRNA + S-adenosyl-L-homocysteine + H(+). Its function is as follows. Specifically methylates the N4 position of cytidine in position 1402 (C1402) of 16S rRNA. The sequence is that of Ribosomal RNA small subunit methyltransferase H from Sulfurovum sp. (strain NBC37-1).